The primary structure comprises 354 residues: D-alanine--D-alanine ligase (354 aa).

An ATP-grasp domain is found at 140–344; sequence KRLLRDSGLS…ISTLLTRLIM (205 aa). Residue 170 to 225 participates in ATP binding; the sequence is ADMFGLPFFVKPVNQGSSIGVAKVNDDYSFHSALDIAFFYSHKIIIESCIAGRELE. Mg(2+) contacts are provided by aspartate 298, glutamate 311, and asparagine 313.

The protein belongs to the D-alanine--D-alanine ligase family. Requires Mg(2+) as cofactor. Mn(2+) serves as cofactor.

It localises to the cytoplasm. The enzyme catalyses 2 D-alanine + ATP = D-alanyl-D-alanine + ADP + phosphate + H(+). It participates in cell wall biogenesis; peptidoglycan biosynthesis. Its function is as follows. Cell wall formation. The chain is D-alanine--D-alanine ligase from Blochmanniella floridana.